The primary structure comprises 518 residues: 2-isopropylmalate synthase (518 aa).

A Pyruvate carboxyltransferase domain is found at 4-266 (INFFDTTLRD…ESTIQLNEIK (263 aa)). 4 residues coordinate Mn(2+): D13, H201, H203, and N237. The regulatory domain stretch occupies residues 391–518 (DFISLQVHYG…GLSKQAAVGS (128 aa)).

This sequence belongs to the alpha-IPM synthase/homocitrate synthase family. LeuA type 1 subfamily. As to quaternary structure, homodimer. Requires Mn(2+) as cofactor.

It is found in the cytoplasm. It carries out the reaction 3-methyl-2-oxobutanoate + acetyl-CoA + H2O = (2S)-2-isopropylmalate + CoA + H(+). It participates in amino-acid biosynthesis; L-leucine biosynthesis; L-leucine from 3-methyl-2-oxobutanoate: step 1/4. Catalyzes the condensation of the acetyl group of acetyl-CoA with 3-methyl-2-oxobutanoate (2-ketoisovalerate) to form 3-carboxy-3-hydroxy-4-methylpentanoate (2-isopropylmalate). This Bacillus licheniformis (strain ATCC 14580 / DSM 13 / JCM 2505 / CCUG 7422 / NBRC 12200 / NCIMB 9375 / NCTC 10341 / NRRL NRS-1264 / Gibson 46) protein is 2-isopropylmalate synthase.